Here is a 448-residue protein sequence, read N- to C-terminus: Methylenetetrahydrofolate--tRNA-(uracil-5-)-methyltransferase TrmFO (448 aa).

An FAD-binding site is contributed by 13–18; that stretch reads GAGLAG.

Belongs to the MnmG family. TrmFO subfamily. Requires FAD as cofactor.

The protein resides in the cytoplasm. The enzyme catalyses uridine(54) in tRNA + (6R)-5,10-methylene-5,6,7,8-tetrahydrofolate + NADH + H(+) = 5-methyluridine(54) in tRNA + (6S)-5,6,7,8-tetrahydrofolate + NAD(+). The catalysed reaction is uridine(54) in tRNA + (6R)-5,10-methylene-5,6,7,8-tetrahydrofolate + NADPH + H(+) = 5-methyluridine(54) in tRNA + (6S)-5,6,7,8-tetrahydrofolate + NADP(+). Its function is as follows. Catalyzes the folate-dependent formation of 5-methyl-uridine at position 54 (M-5-U54) in all tRNAs. This chain is Methylenetetrahydrofolate--tRNA-(uracil-5-)-methyltransferase TrmFO, found in Streptococcus pyogenes serotype M1.